A 168-amino-acid chain; its full sequence is MKPNDKVIIGRLARPYGLRGWIKVVSFTHPIDNLLNHPTWQIQHNNEWQPLKLQAGKLHEPFLVVKLENIDDPETAKHYTNDLIAIERGALGALKEGDYYWTDLIGLAVVNTHGIELGTVDSLIETGSNDVLVVRSKERERLIPYTSYTIQSIDLEKKIIVVEWDADF.

The PRC barrel domain occupies 96–168 (EGDYYWTDLI…IIVVEWDADF (73 aa)).

It belongs to the RimM family. As to quaternary structure, binds ribosomal protein uS19.

The protein resides in the cytoplasm. Functionally, an accessory protein needed during the final step in the assembly of 30S ribosomal subunit, possibly for assembly of the head region. Essential for efficient processing of 16S rRNA. May be needed both before and after RbfA during the maturation of 16S rRNA. It has affinity for free ribosomal 30S subunits but not for 70S ribosomes. This is Ribosome maturation factor RimM from Coxiella burnetii (strain Dugway 5J108-111).